We begin with the raw amino-acid sequence, 65 residues long: MAVQQNKKTPSKRGMRRAHDVLKKPTFSVDFSSGETHRRHHVTPDGYYRGKKVIFSKDENEEENE.

The interval 1–45 (MAVQQNKKTPSKRGMRRAHDVLKKPTFSVDFSSGETHRRHHVTPD) is disordered.

This sequence belongs to the bacterial ribosomal protein bL32 family.

This chain is Large ribosomal subunit protein bL32, found in Nitrosococcus oceani (strain ATCC 19707 / BCRC 17464 / JCM 30415 / NCIMB 11848 / C-107).